Reading from the N-terminus, the 173-residue chain is 2-C-methyl-D-erythritol 2,4-cyclodiphosphate synthase (173 aa).

A divalent metal cation is bound by residues aspartate 17 and histidine 19. Residues 17–19 (DVH) and 49–50 (HS) each bind 4-CDP-2-C-methyl-D-erythritol 2-phosphate. A divalent metal cation is bound at residue histidine 57. 4-CDP-2-C-methyl-D-erythritol 2-phosphate contacts are provided by residues 76 to 80 (FPNTD), 147 to 150 (TTTE), phenylalanine 154, and arginine 157.

It belongs to the IspF family. Homotrimer. It depends on a divalent metal cation as a cofactor.

It catalyses the reaction 4-CDP-2-C-methyl-D-erythritol 2-phosphate = 2-C-methyl-D-erythritol 2,4-cyclic diphosphate + CMP. It functions in the pathway isoprenoid biosynthesis; isopentenyl diphosphate biosynthesis via DXP pathway; isopentenyl diphosphate from 1-deoxy-D-xylulose 5-phosphate: step 4/6. Functionally, involved in the biosynthesis of isopentenyl diphosphate (IPP) and dimethylallyl diphosphate (DMAPP), two major building blocks of isoprenoid compounds. Catalyzes the conversion of 4-diphosphocytidyl-2-C-methyl-D-erythritol 2-phosphate (CDP-ME2P) to 2-C-methyl-D-erythritol 2,4-cyclodiphosphate (ME-CPP) with a corresponding release of cytidine 5-monophosphate (CMP). This chain is 2-C-methyl-D-erythritol 2,4-cyclodiphosphate synthase, found in Ehrlichia chaffeensis (strain ATCC CRL-10679 / Arkansas).